Reading from the N-terminus, the 217-residue chain is Salivary glue protein Sgs-3 (217 aa).

The N-terminal stretch at 1–23 is a signal peptide; it reads MKLTIATVLASILLIGFANVANC. The segment covering 45–130 has biased composition (low complexity); that stretch reads KSTSTTTTTT…KPTTHSTPKT (86 aa). Residues 45-163 form a disordered region; the sequence is KSTSTTTTTT…KHTTPTTTTT (119 aa). The segment covering 131–154 has biased composition (basic residues); the sequence is KPTKHTTPKTKPTKHTTPKTKPTK.

The polypeptide is Salivary glue protein Sgs-3 (Sgs3) (Drosophila simulans (Fruit fly)).